Here is a 118-residue protein sequence, read N- to C-terminus: Large ribosomal subunit protein bL19 (118 aa).

It belongs to the bacterial ribosomal protein bL19 family.

Functionally, this protein is located at the 30S-50S ribosomal subunit interface and may play a role in the structure and function of the aminoacyl-tRNA binding site. In Helicobacter acinonychis (strain Sheeba), this protein is Large ribosomal subunit protein bL19.